A 381-amino-acid polypeptide reads, in one-letter code: Arrestin homolog (381 aa).

This sequence belongs to the arrestin family.

The sequence is that of Arrestin homolog from Heliothis virescens (Tobacco budworm moth).